Consider the following 744-residue polypeptide: Polyribonucleotide nucleotidyltransferase (744 aa).

Positions 487 and 493 each coordinate Mg(2+). The region spanning Pro554–Val613 is the KH domain. Residues Gly623–Lys691 enclose the S1 motif domain. The segment at Lys691 to Ser744 is disordered. Basic and acidic residues predominate over residues Ser707–Asp718. Residues Glu727 to Val736 are compositionally biased toward polar residues.

The protein belongs to the polyribonucleotide nucleotidyltransferase family. Mg(2+) serves as cofactor.

The protein localises to the cytoplasm. The catalysed reaction is RNA(n+1) + phosphate = RNA(n) + a ribonucleoside 5'-diphosphate. Its function is as follows. Involved in mRNA degradation. Catalyzes the phosphorolysis of single-stranded polyribonucleotides processively in the 3'- to 5'-direction. This Rickettsia bellii (strain OSU 85-389) protein is Polyribonucleotide nucleotidyltransferase.